A 104-amino-acid chain; its full sequence is Large ribosomal subunit protein bL27 (104 aa).

Residues Met-1–Phe-15 constitute a propeptide that is removed on maturation.

It belongs to the bacterial ribosomal protein bL27 family. In terms of processing, the N-terminus is cleaved by ribosomal processing cysteine protease Prp.

The polypeptide is Large ribosomal subunit protein bL27 (Mycoplasma pneumoniae (strain ATCC 29342 / M129 / Subtype 1) (Mycoplasmoides pneumoniae)).